The following is a 299-amino-acid chain: Probable plastid-lipid-associated protein 13, chloroplastic (299 aa).

A chloroplast-targeting transit peptide spans 1 to 48 (MALIHGSVPGTSAVRLVFSTSASPSRFCLNVPVVKQGWKNSCRRRVLR). N-acetylvaline is present on A2.

This sequence belongs to the PAP/fibrillin family.

The protein resides in the plastid. Its subcellular location is the chloroplast. It localises to the plastoglobule. This is Probable plastid-lipid-associated protein 13, chloroplastic (PAP13) from Arabidopsis thaliana (Mouse-ear cress).